Consider the following 323-residue polypeptide: Aldo-keto reductase family 1 member C21 (323 aa).

20–24 (GFGTA) is an NADP(+) binding site. K31 serves as a coordination point for substrate. D50 is an NADP(+) binding site. The active-site Proton donor is the Y55. Residue H117 coordinates substrate. NADP(+)-binding positions include 166–167 (SN), Q190, 216–224 (YGVLGTQRY), and 270–280 (TSLKEERIKEN).

Belongs to the aldo/keto reductase family. As to quaternary structure, monomer. Detected in kidney and brain.

Its subcellular location is the cytoplasm. The enzyme catalyses androsterone + NADP(+) = 5alpha-androstan-3,17-dione + NADPH + H(+). It catalyses the reaction androsterone + NAD(+) = 5alpha-androstan-3,17-dione + NADH + H(+). Inhibited by high concentrations of substrate. Functionally, NADP-dependent 17-alpha-hydroxysteroid dehydrogenase that converts 5-alpha-androstane-3,17-dione into androsterone. Has lower 3-alpha-hydroxysteroid dehydrogenase activity. Has broad substrate specificity and acts on various 17-alpha-hydroxysteroids, 17-ketosteroids, 3-alpha hydroxysteroids and 3-ketosteroids. Reduction of keto groups is strictly stereoselective. Reduction of 17-ketosteroids yields only 17-alpha-hydroxysteroids. Likewise, reduction of 3-ketosteroids yields only 3-alpha-hydroxysteroids. The polypeptide is Aldo-keto reductase family 1 member C21 (Akr1c21) (Mus musculus (Mouse)).